The following is a 194-amino-acid chain: Glycerol-3-phosphate acyltransferase (194 aa).

5 helical membrane passes run 7 to 27, 59 to 79, 86 to 106, 116 to 136, and 157 to 177; these read LLMATSIAYLLGSIMGAYWVC, LTLFWDAAKGAAAVCIAAMLG, GVTAVAAIVGHMLPAFHHFKG, AGLALAWQTTLALTLVWAAVV, and AWRLNPEHLALFLILSLFILI.

The protein belongs to the PlsY family. In terms of assembly, probably interacts with PlsX.

Its subcellular location is the cell inner membrane. It catalyses the reaction an acyl phosphate + sn-glycerol 3-phosphate = a 1-acyl-sn-glycero-3-phosphate + phosphate. It participates in lipid metabolism; phospholipid metabolism. Its function is as follows. Catalyzes the transfer of an acyl group from acyl-phosphate (acyl-PO(4)) to glycerol-3-phosphate (G3P) to form lysophosphatidic acid (LPA). This enzyme utilizes acyl-phosphate as fatty acyl donor, but not acyl-CoA or acyl-ACP. The polypeptide is Glycerol-3-phosphate acyltransferase (Hahella chejuensis (strain KCTC 2396)).